Here is a 1007-residue protein sequence, read N- to C-terminus: Zinc finger CCCH domain-containing protein 4 (1007 aa).

The Helicase ATP-binding domain maps to 28–192 (VEKVKGNRVT…FRDLGRGERV (165 aa)). 41-48 (GDTGCGKS) contributes to the ATP binding site. A DEAH box motif is present at residues 139–142 (DEIH). Positions 250–420 (LIHRLLLHIH…EQVLMICCAE (171 aa)) constitute a Helicase C-terminal domain. 2 consecutive C3H1-type zinc fingers follow at residues 723–750 (ALEN…HSSR) and 751–778 (APRP…HDSG).

The protein is Zinc finger CCCH domain-containing protein 4 of Oryza sativa subsp. japonica (Rice).